The sequence spans 226 residues: Elongation factor 1-delta 2 (226 aa).

Positions Thr-82 to Lys-131 are disordered. Acidic residues predominate over residues Ala-97 to Glu-113. Residues Glu-114–Ala-124 are compositionally biased toward basic and acidic residues.

This sequence belongs to the EF-1-beta/EF-1-delta family. In terms of assembly, EF-1 is composed of 4 subunits: alpha, beta (1B-alpha=beta'), delta (1B-beta), and gamma (1B-gamma).

EF-1-beta and EF-1-beta' stimulate the exchange of GDP bound to EF-1-alpha to GTP. This is Elongation factor 1-delta 2 from Oryza sativa subsp. japonica (Rice).